A 230-amino-acid chain; its full sequence is Protein FAM3A (230 aa).

The N-terminal stretch at 1–33 (MRLAGPLRIVVLVVSVGVTWIVVSILLGGPGSG) is a signal peptide. Intrachain disulfides connect Cys59–Cys87 and Cys65–Cys222. Residues 68–226 (EHLAFRVVSG…LEMEGCIPRR (159 aa)) form the GG-type lectin domain.

Belongs to the FAM3 family. In terms of tissue distribution, in similar amounts in testis, pancreas, adrenal, placenta, brain, fetal brain, liver, kidney, skeletal muscle and heart.

It localises to the secreted. Its function is as follows. May act as a defensin against invading fungal microorganisms. The sequence is that of Protein FAM3A (FAM3A) from Homo sapiens (Human).